Consider the following 416-residue polypeptide: Gamma-glutamyl phosphate reductase (416 aa).

Belongs to the gamma-glutamyl phosphate reductase family.

It localises to the cytoplasm. The enzyme catalyses L-glutamate 5-semialdehyde + phosphate + NADP(+) = L-glutamyl 5-phosphate + NADPH + H(+). Its pathway is amino-acid biosynthesis; L-proline biosynthesis; L-glutamate 5-semialdehyde from L-glutamate: step 2/2. Catalyzes the NADPH-dependent reduction of L-glutamate 5-phosphate into L-glutamate 5-semialdehyde and phosphate. The product spontaneously undergoes cyclization to form 1-pyrroline-5-carboxylate. This is Gamma-glutamyl phosphate reductase from Leptospira interrogans serogroup Icterohaemorrhagiae serovar copenhageni (strain Fiocruz L1-130).